The primary structure comprises 1021 residues: Sodium/potassium-transporting ATPase subunit alpha-1 (1021 aa).

Positions 1–5 (MGKGV) are excised as a propeptide. Positions 1 to 11 (MGKGVGRDKYE) are enriched in basic and acidic residues. Residues 1-36 (MGKGVGRDKYEPAAVSEHGDKKKAKKERDMDELKKE) form a disordered region. Over 4 to 85 (GVGRDKYEPA…NALTPPPTTP (82 aa)) the chain is Cytoplasmic. An N6-acetyllysine modification is found at lysine 9. At tyrosine 10 the chain carries Phosphotyrosine. Residue serine 16 is modified to Phosphoserine; by PKC. N6-acetyllysine is present on lysine 21. A compositionally biased stretch (basic and acidic residues) spans 26–36 (KERDMDELKKE). 2 positions are modified to phosphoserine: serine 38 and serine 45. The interval 80–82 (PPP) is phosphoinositide-3 kinase binding. A helical membrane pass occupies residues 86 to 106 (EWVKFCRQLFGGFSMLLWIGA). The Extracellular segment spans residues 107 to 129 (ILCFLAYGIQAATEEEPQNDNLY). A helical membrane pass occupies residues 130 to 150 (LGVVLSAVVIITGCFSYYQEA). Over 151–286 (KSSKIMESFK…GGQTPIAAEI (136 aa)) the chain is Cytoplasmic. The tract at residues 214–233 (SSLTGESEPQTRSPDFTNEN) is disordered. Serine 226 carries the phosphoserine modification. Phosphotyrosine is present on tyrosine 258. The helical transmembrane segment at 287–306 (EHFIHIITGVAVFLGVSFFI) threads the bilayer. The Extracellular segment spans residues 307 to 318 (LSLILEYTWLEA). A helical membrane pass occupies residues 319-336 (VIFLIGIIVANVPEGLLA). Residues 337–770 (TVTVCLTLTA…EEGRLIFDNL (434 aa)) are Cytoplasmic-facing. Aspartate 374 serves as the catalytic 4-aspartylphosphate intermediate. Serine 450 and serine 482 each carry phosphoserine. Lysine 485 lines the ATP pocket. Tyrosine 540 bears the Phosphotyrosine mark. The tract at residues 594–715 (RAAVPDAVGK…QGAIVAVTGD (122 aa)) is mediates interaction with SCN7A. Lysine 659 carries the N6-succinyllysine modification. Serine 666 and serine 673 each carry phosphoserine. Residues aspartate 715 and aspartate 719 each coordinate Mg(2+). The chain crosses the membrane as a helical span at residues 771–790 (KKSIAYTLTSNIPEITPFLI). The Extracellular segment spans residues 791–800 (FIIANIPLPL). The chain crosses the membrane as a helical span at residues 801-821 (GTVTILCIDLGTDMVPAISLA). The Cytoplasmic portion of the chain corresponds to 822-841 (YEQAESDIMKRQPRNPKTDK). The helical transmembrane segment at 842–864 (LVNERLISMAYGQIGMIQALGGF) threads the bilayer. Over 865–916 (FTYFVILAENGFLPTHLLGLRVDWDDRWINDVEDSYGQQWTYEQRKIVEFTC) the chain is Extracellular. Residues 917–936 (HTAFFVSIVVVQWADLVICK) traverse the membrane as a helical segment. Over 937 to 949 (TRRNSVFQQGMKN) the chain is Cytoplasmic. Serine 941 is modified (phosphoserine; by PKA). Residues 950-968 (KILIFGLFEETALAAFLSY) traverse the membrane as a helical segment. The Extracellular segment spans residues 969-983 (CPGMGVALRMYPLKP). Residues 984–1004 (TWWFCAFPYSLLIFVYDEVRK) form a helical membrane-spanning segment. Topologically, residues 1005-1021 (LIIRRRPGGWVEKETYY) are cytoplasmic.

Belongs to the cation transport ATPase (P-type) (TC 3.A.3) family. Type IIC subfamily. The sodium/potassium-transporting ATPase is composed of a catalytic alpha subunit, an auxiliary non-catalytic beta subunit and an additional regulatory subunit. Interacts with regulatory subunit FXYD1. Interacts with regulatory subunit FXYD3. Interacts with SIK1. Interacts with SLC35G1 and STIM1. Interacts with CLN3; this interaction regulates the sodium/potassium-transporting ATPase complex localization at the plasma membrane. Interacts with SCN7A; activates ATP1A1 P-type sodium:potassium-exchanging transporter activity which indirectly signals to nearby neurons to regulate sodium homeostasis. In terms of processing, phosphorylation on Tyr-10 modulates pumping activity. Phosphorylation of Ser-941 by PKA modulates the response of ATP1A1 to PKC. Dephosphorylation by protein phosphatase 2A (PP2A) following increases in intracellular sodium, leading to increase catalytic activity.

The protein localises to the cell membrane. The protein resides in the basolateral cell membrane. It localises to the sarcolemma. Its subcellular location is the cell projection. It is found in the axon. The protein localises to the melanosome. The enzyme catalyses K(+)(out) + Na(+)(in) + ATP + H2O = K(+)(in) + Na(+)(out) + ADP + phosphate + H(+). This is the catalytic component of the active enzyme, which catalyzes the hydrolysis of ATP coupled with the exchange of sodium and potassium ions across the plasma membrane. This action creates the electrochemical gradient of sodium and potassium ions, providing the energy for active transport of various nutrients. Could also be part of an osmosensory signaling pathway that senses body-fluid sodium levels and controls salt intake behavior as well as voluntary water intake to regulate sodium homeostasis. This Canis lupus familiaris (Dog) protein is Sodium/potassium-transporting ATPase subunit alpha-1 (ATP1A1).